Here is a 231-residue protein sequence, read N- to C-terminus: Augmin complex subunit dgt2 (231 aa).

Residues glutamine 128–glycine 199 adopt a coiled-coil conformation.

Component of the augmin complex composed of dgt2, dgt3, dgt4, dgt5, dgt6, msd1, msd5 and wac. The complex interacts directly or indirectly with microtubules and is required for centrosome-independent generation of spindle microtubules. dgt2 interacts directly with wac (via coiled coil). In terms of tissue distribution, in adult females, detected only in the abdomen with no expression in the head or thorax (at protein level).

It localises to the cytoplasm. It is found in the cytoskeleton. The protein localises to the spindle. Its subcellular location is the spindle pole. In terms of biological role, as part of the augmin complex, plays a role in centrosome-independent generation of spindle microtubules. The complex is required for mitotic spindle assembly through its involvement in localizing gamma-tubulin to spindle microtubules. dgt2 binds to microtubules in vitro. The chain is Augmin complex subunit dgt2 from Drosophila melanogaster (Fruit fly).